The sequence spans 103 residues: Histone H4 (103 aa).

Position 6 is an N6-acetyl-N6-methyllysine; alternate (K6). N6-methyllysine; alternate is present on residues K6, K9, and K13. N6-acetyl-N6-methyllysine; alternate is present on K13. The DNA-binding element occupies 17–21 (KRHRK). K92 bears the N6-glutaryllysine mark.

The protein belongs to the histone H4 family. As to quaternary structure, the nucleosome is a histone octamer containing two molecules each of H2A, H2B, H3 and H4 assembled in one H3-H4 heterotetramer and two H2A-H2B heterodimers. The octamer wraps approximately 147 bp of DNA. Post-translationally, glutarylation at Lys-92 (H4K91glu) destabilizes nucleosomes by promoting dissociation of the H2A-H2B dimers from nucleosomes.

Its subcellular location is the nucleus. It localises to the chromosome. Functionally, core component of nucleosome. Nucleosomes wrap and compact DNA into chromatin, limiting DNA accessibility to the cellular machineries which require DNA as a template. Histones thereby play a central role in transcription regulation, DNA repair, DNA replication and chromosomal stability. DNA accessibility is regulated via a complex set of post-translational modifications of histones, also called histone code, and nucleosome remodeling. This chain is Histone H4 (ahsb4), found in Blastobotrys adeninivorans (Yeast).